The sequence spans 121 residues: MRLPAQLLGLLMLWVPGSSEDIVMTQTPLSLPVTPGEPASISCRSSQSLLDSDDGNTYLDWYLQKPGQSPQLLIYTLSYRASGVPDRFSGSGSGTDFTLKISRVEAEDVGVYYCMQRIEFP.

Residues 1–19 (MRLPAQLLGLLMLWVPGSS) form the signal peptide. In terms of domain architecture, Ig-like spans 20–121 (EDIVMTQTPL…YYCMQRIEFP (102 aa)). Residues 21–43 (DIVMTQTPLSLPVTPGEPASISC) form a framework-1 region. Cys-43 and Cys-114 are joined by a disulfide. Positions 44–60 (RSSQSLLDSDDGNTYLD) are complementarity-determining-1. Residues 61 to 75 (WYLQKPGQSPQLLIY) form a framework-2 region. Residues 76–82 (TLSYRAS) form a complementarity-determining-2 region. The interval 83–114 (GVPDRFSGSGSGTDFTLKISRVEAEDVGVYYC) is framework-3. Residues 115–121 (MQRIEFP) are complementarity-determining-3.

As to quaternary structure, immunoglobulins are composed of two identical heavy chains and two identical light chains; disulfide-linked.

It is found in the secreted. The protein localises to the cell membrane. V region of the variable domain of immunoglobulin light chains that participates in the antigen recognition. Immunoglobulins, also known as antibodies, are membrane-bound or secreted glycoproteins produced by B lymphocytes. In the recognition phase of humoral immunity, the membrane-bound immunoglobulins serve as receptors which, upon binding of a specific antigen, trigger the clonal expansion and differentiation of B lymphocytes into immunoglobulins-secreting plasma cells. Secreted immunoglobulins mediate the effector phase of humoral immunity, which results in the elimination of bound antigens. The antigen binding site is formed by the variable domain of one heavy chain, together with that of its associated light chain. Thus, each immunoglobulin has two antigen binding sites with remarkable affinity for a particular antigen. The variable domains are assembled by a process called V-(D)-J rearrangement and can then be subjected to somatic hypermutations which, after exposure to antigen and selection, allow affinity maturation for a particular antigen. This Homo sapiens (Human) protein is Immunoglobulin kappa variable 2-40.